A 290-amino-acid polypeptide reads, in one-letter code: Outer dense fiber protein 4 (290 aa).

Ser28 is modified (phosphoserine). Helical transmembrane passes span 44-64 (AQVV…VMVF), 125-145 (PVFG…FVLT), 164-184 (LIGI…LLLF), and 201-221 (IGWS…CGIL). Residues 247–290 (GPESLVSPSQTPSSQENSQESPKDDQKPSSPDKVVSPPQPDTTG) form a disordered region. The segment covering 252–266 (VSPSQTPSSQENSQE) has biased composition (polar residues).

In terms of tissue distribution, expressed in testis.

Its subcellular location is the membrane. Component of the outer dense fibers (ODF) of spermatozoa which could be involved in sperm tail structure, sperm movement and general organization of cellular cytoskeleton. The polypeptide is Outer dense fiber protein 4 (Odf4) (Mus musculus (Mouse)).